The following is a 620-amino-acid chain: Putative ribonuclease H protein At1g65750 (620 aa).

The 131-residue stretch at 456 to 586 (CVGWVKVNTD…ADGLANYAFS (131 aa)) folds into the RNase H type-1 domain. Mg(2+) is bound by residues Asp-465, Glu-505, Asp-529, and Asp-578.

Mg(2+) is required as a cofactor.

It carries out the reaction Endonucleolytic cleavage to 5'-phosphomonoester.. The polypeptide is Putative ribonuclease H protein At1g65750 (Arabidopsis thaliana (Mouse-ear cress)).